The sequence spans 25 residues: Css54 (25 aa).

Expressed by the venom gland.

The protein resides in the secreted. It is found in the target cell membrane. In terms of biological role, amphipathic peptide that shows antibacterial activity against E.coli (MIC=12.5 ug/ml) and S.aureus (MIC=12.5 ug/ml). Has hemolytic activity against human erythrocytes (25 uM provokes 83% of hemolysis). May act by disrupting the integrity of the bacterial cell membrane. Increases efficacy of antibiotics (ethambutol, pyrazinamide, isoniazid, rifampicin) when tested against S.aureus, probably by facilitating their incorporation into the bacteria. In Centruroides suffusus (Durango bark scorpion), this protein is Css54.